We begin with the raw amino-acid sequence, 357 residues long: Protein BIG GRAIN 1-like A (357 aa).

Disordered regions lie at residues 1–146 (MEIT…KELG) and 208–233 (SSTC…GKSK). A compositionally biased stretch (basic and acidic residues) spans 75–87 (DFERSRRKTDFLR). Low complexity-rich tracts occupy residues 88–104 (HSNS…SSES) and 112–127 (KSSA…QPKP). Residues 129–139 (RTSSVDHSSAV) show a composition bias toward polar residues. Positions 208-223 (SSTCSSASSFSRSCLS) are enriched in low complexity.

This sequence belongs to the BIG GRAIN 1 (BG1) plant protein family.

It localises to the cell membrane. In terms of biological role, involved in auxin transport. Regulator of the auxin signaling pathway. The sequence is that of Protein BIG GRAIN 1-like A from Arabidopsis thaliana (Mouse-ear cress).